We begin with the raw amino-acid sequence, 726 residues long: Mitotic spindle checkpoint protein MAD1 (726 aa).

The interval 1–30 (MILRTPQPKRLRSDAGESPFPTGATGSGNQ) is disordered. Coiled coils occupy residues 68–246 (ADVL…LKLI) and 272–625 (SDNS…VFAD).

The protein belongs to the MAD1 family. In terms of assembly, homodimer. Part of the mitotic checkpoint complex (MCC). Interacts with MAD2 and NUA.

The protein resides in the nucleus envelope. In terms of biological role, required for the execution of the mitotic checkpoint which monitors the process of kinetochore-spindle attachment and delays the onset of anaphase when this process is not complete. It inhibits the activity of the anaphase promoting complex by sequestering CDC20 until all chromosomes are aligned at the metaphase plate. Required for anchoring MAD2 to the nuclear envelope. This is Mitotic spindle checkpoint protein MAD1 from Arabidopsis thaliana (Mouse-ear cress).